The primary structure comprises 141 residues: Nucleoside diphosphate kinase (141 aa).

Positions 11, 59, 87, 93, 104, and 114 each coordinate ATP. Histidine 117 serves as the catalytic Pros-phosphohistidine intermediate.

Belongs to the NDK family. Homotetramer. The cofactor is Mg(2+).

It localises to the cytoplasm. The enzyme catalyses a 2'-deoxyribonucleoside 5'-diphosphate + ATP = a 2'-deoxyribonucleoside 5'-triphosphate + ADP. The catalysed reaction is a ribonucleoside 5'-diphosphate + ATP = a ribonucleoside 5'-triphosphate + ADP. Its function is as follows. Major role in the synthesis of nucleoside triphosphates other than ATP. The ATP gamma phosphate is transferred to the NDP beta phosphate via a ping-pong mechanism, using a phosphorylated active-site intermediate. This chain is Nucleoside diphosphate kinase, found in Photorhabdus laumondii subsp. laumondii (strain DSM 15139 / CIP 105565 / TT01) (Photorhabdus luminescens subsp. laumondii).